We begin with the raw amino-acid sequence, 271 residues long: Neurexophilin-1 (271 aa).

A signal peptide spans 1–21 (MQAACWYVLFLLQPTVYLVTC). The interval 22 to 97 (ANLTNGGKSE…WDWLRNSTDL (76 aa)) is II. N-linked (GlcNAc...) asparagine glycosylation is found at Asn23, Asn68, Asn93, Asn146, Asn156, and Asn162. The tract at residues 98–176 (QEPRPRAKRR…LVPPTKIVEF (79 aa)) is III. The tract at residues 177 to 185 (DLAQQTVID) is IV (linker domain). The v (Cys-rich) stretch occupies residues 186 to 271 (AKDSKSFNCR…HSDTPYFPSG (86 aa)).

The protein belongs to the neurexophilin family.

The protein localises to the secreted. Functionally, may be signaling molecules that resemble neuropeptides and that act by binding to alpha-neurexins and possibly other receptors. The chain is Neurexophilin-1 (NXPH1) from Homo sapiens (Human).